Consider the following 535-residue polypeptide: T-complex protein 1 subunit beta (535 aa).

The residue at position 2 (Ala-2) is an N-acetylalanine. Ser-3 bears the Phosphoserine mark. The residue at position 13 (Lys-13) is an N6-acetyllysine. Gly-44 contributes to the ADP binding site. Gly-44 is an ATP binding site. Residue Asp-97 participates in Mg(2+) binding. ADP contacts are provided by Gly-98, Thr-99, Thr-100, Ser-101, Ser-168, and Ser-169. Residues Gly-98, Thr-99, and Thr-100 each coordinate ATP. An N6-acetyllysine modification is found at Lys-181. A Glycyl lysine isopeptide (Lys-Gly) (interchain with G-Cter in SUMO2) cross-link involves residue Lys-248. Ser-260 carries the post-translational modification Phosphoserine. Thr-261 bears the Phosphothreonine mark. Residues Gly-410, Glu-495, and Lys-500 each coordinate ADP. Glu-495 and Lys-500 together coordinate ATP.

The protein belongs to the TCP-1 chaperonin family. Component of the chaperonin-containing T-complex (TRiC), a hexadecamer composed of two identical back-to-back stacked rings enclosing a protein folding chamber. Each ring is made up of eight different subunits: TCP1/CCT1, CCT2, CCT3, CCT4, CCT5, CCT6A/CCT6, CCT7, CCT8. Interacts with PACRG. Interacts with FLCN. Interacts with DLEC1. Interacts with SVEP1. The N-terminus is blocked.

It is found in the cytoplasm. The enzyme catalyses ATP + H2O = ADP + phosphate + H(+). Its function is as follows. Component of the chaperonin-containing T-complex (TRiC), a molecular chaperone complex that assists the folding of actin, tubulin and other proteins upon ATP hydrolysis. The TRiC complex mediates the folding of WRAP53/TCAB1, thereby regulating telomere maintenance. As part of the TRiC complex may play a role in the assembly of BBSome, a complex involved in ciliogenesis regulating transports vesicles to the cilia. The sequence is that of T-complex protein 1 subunit beta (Cct2) from Mus musculus (Mouse).